Here is a 195-residue protein sequence, read N- to C-terminus: Lipid A acyltransferase PagP (195 aa).

The signal sequence occupies residues 1-30; it reads MRLTLTSRSRLFVLSSLLFISTFDVLSAQA. Residues His67, Asp110, and Ser111 contribute to the active site.

This sequence belongs to the lipid A palmitoyltransferase family. As to quaternary structure, homodimer.

The protein localises to the cell outer membrane. It catalyses the reaction a lipid A + a 1,2-diacyl-sn-glycero-3-phosphocholine = a hepta-acyl lipid A + a 2-acyl-sn-glycero-3-phosphocholine. It carries out the reaction a lipid IVA + a 1,2-diacyl-sn-glycero-3-phosphocholine = a lipid IVB + a 2-acyl-sn-glycero-3-phosphocholine. The catalysed reaction is a lipid IIA + a 1,2-diacyl-sn-glycero-3-phosphocholine = a lipid IIB + a 2-acyl-sn-glycero-3-phosphocholine. In terms of biological role, transfers a fatty acid residue from the sn-1 position of a phospholipid to the N-linked hydroxyfatty acid chain on the proximal unit of lipid A or its precursors. This Dickeya chrysanthemi (strain Ech1591) (Dickeya zeae (strain Ech1591)) protein is Lipid A acyltransferase PagP.